Here is a 448-residue protein sequence, read N- to C-terminus: Tubulin alpha-2 chain (448 aa).

Positions 11, 69, 138, 142, 143, 177, 204, and 226 each coordinate GTP. Glu-69 contacts Mg(2+). The active site involves Glu-252. Residues 428–448 (KDYEEVGADSNEGGEEEGEEY) form a disordered region. Acidic residues predominate over residues 429–448 (DYEEVGADSNEGGEEEGEEY).

Belongs to the tubulin family. In terms of assembly, dimer of alpha and beta chains. A typical microtubule is a hollow water-filled tube with an outer diameter of 25 nm and an inner diameter of 15 nM. Alpha-beta heterodimers associate head-to-tail to form protofilaments running lengthwise along the microtubule wall with the beta-tubulin subunit facing the microtubule plus end conferring a structural polarity. Microtubules usually have 13 protofilaments but different protofilament numbers can be found in some organisms and specialized cells. It depends on Mg(2+) as a cofactor. Post-translationally, undergoes a tyrosination/detyrosination cycle, the cyclic removal and re-addition of a C-terminal tyrosine residue. In terms of tissue distribution, expressed in intestine, pharyngeal muscle cells, and a subset of neurons.

The protein localises to the cytoplasm. It is found in the cytoskeleton. The enzyme catalyses GTP + H2O = GDP + phosphate + H(+). In terms of biological role, tubulin is the major constituent of microtubules, a cylinder consisting of laterally associated linear protofilaments composed of alpha- and beta-tubulin heterodimers. Microtubules grow by the addition of GTP-tubulin dimers to the microtubule end, where a stabilizing cap forms. Below the cap, tubulin dimers are in GDP-bound state, owing to GTPase activity of alpha-tubulin. Required for the normal dynamic behavior of the non-centrosomal microtubules in the epidermal syncytium. Involved in the redistribution of microtubule end-binding protein EB1/ebp-2 caused by wounding. Required to modulate expression in the epidermis of antimicrobial peptides, such as nlp-29, after wounding, or fungal infection. The sequence is that of Tubulin alpha-2 chain (tba-2) from Caenorhabditis elegans.